Reading from the N-terminus, the 370-residue chain is MRIMSIMLHLLATILLSSAVSAQNANAASTRRLIGEDRESGRRWGVAATDLGIPYDQHNGEIGFLFGDTVSTKWVQEAKDLRSPVMLRSGIHPGEDGGIVFESAAGVDGDGLAPRLFYNGDRGDDGTGTGTWEFTVLPNDGISFPETGEHIISYLSIMNFTTPWTPNYSGLAYSTDGNTFTRLPTKWLNNDNNTDPFQMWTMQRDGDWVYVFTVRSAPQYGPLMLQRVPWDKMTNKTEYQGWGWNGEDWGWQRPCSPILDGYFGEPSVRRLHDGTWAMVYLNASTSTPHIVSRSAKDPTGPWSEEKVQVNQEGDGSLLYGGFIHPWSTSKGNQLYLMVSNWTSTSNLSQTTEAVADYEGTVSVSQFTGTL.

The N-terminal stretch at Met1–Ala22 is a signal peptide. Residues Asn159, Asn167, Asn192, Asn235, Asn282, Asn340, and Asn346 are each glycosylated (N-linked (GlcNAc...) asparagine).

Its function is as follows. Part of the gene cluster that mediates the biosynthesis of notoamide, a fungal indole alkaloid that belongs to a family of natural products containing a characteristic bicyclo[2.2.2]diazaoctane core. The first step of notoamide biosynthesis involves coupling of L-proline and L-tryptophan by the bimodular NRPS notE, to produce cyclo-L-tryptophan-L-proline called brevianamide F. The reverse prenyltransferase notF then acts as a deoxybrevianamide E synthase and converts brevianamide F to deoxybrevianamide E via reverse prenylation at C-2 of the indole ring leading to the bicyclo[2.2.2]diazaoctane core. Deoxybrevianamide E is further hydroxylated at C-6 of the indole ring, likely catalyzed by the cytochrome P450 monooxygenase notG, to yield 6-hydroxy-deoxybrevianamide E. 6-hydroxy-deoxybrevianamide E is a specific substrate of the prenyltransferase notC for normal prenylation at C-7 to produce 6-hydroxy-7-prenyl-deoxybrevianamide, also called notoamide S. As the proposed pivotal branching point in notoamide biosynthesis, notoamide S can be diverted to notoamide E through an oxidative pyran ring closure putatively catalyzed by either notH cytochrome P450 monooxygenase or the notD FAD-linked oxidoreductase. This step would be followed by an indole 2,3-epoxidation-initiated pinacol-like rearrangement catalyzed by the notB FAD-dependent monooxygenase leading to the formation of notoamide C and notoamide D. On the other hand notoamide S is converted to notoamide T by notH (or notD), a bifunctional oxidase that also functions as the intramolecular Diels-Alderase responsible for generation of (+)-notoamide T. To generate antipodal (-)-notoaminide T, notH' (or notD') in Aspergillus versicolor is expected to catalyze a Diels-Alder reaction leading to the opposite stereochemistry. The remaining oxidoreductase notD (or notH) likely catalyzes the oxidative pyran ring formation to yield (+)-stephacidin A. The FAD-dependent monooxygenase notI is highly similar to notB and is predicted to catalyze a similar conversion from (+)-stephacidin A to (-)-notoamide B via the 2,3-epoxidation of (+)-stephacidin A followed by a pinacol-type rearrangement. Finally, it remains unclear which enzyme could be responsible for the final hydroxylation steps leading to notoamide A and sclerotiamide. The function of notJ in the notoamide biosynthesis has not been determined yet. The polypeptide is Notoamide biosynthesis cluster protein J (Aspergillus sp. (strain MF297-2)).